The primary structure comprises 1368 residues: DNA-directed RNA polymerase subunit beta (1368 aa).

It belongs to the RNA polymerase beta chain family. As to quaternary structure, the RNAP catalytic core consists of 2 alpha, 1 beta, 1 beta' and 1 omega subunit. When a sigma factor is associated with the core the holoenzyme is formed, which can initiate transcription.

The enzyme catalyses RNA(n) + a ribonucleoside 5'-triphosphate = RNA(n+1) + diphosphate. DNA-dependent RNA polymerase catalyzes the transcription of DNA into RNA using the four ribonucleoside triphosphates as substrates. This chain is DNA-directed RNA polymerase subunit beta, found in Legionella pneumophila subsp. pneumophila (strain Philadelphia 1 / ATCC 33152 / DSM 7513).